The following is a 115-amino-acid chain: Putative type I restriction enzyme MpnIIP endonuclease subunit middle part (115 aa).

In terms of biological role, the middle section of a putative type I restriction enzyme that if reconstituted might recognize 5'-GAN(7)TAY-3' and cleave a random distance away. Subunit R is required for both nuclease and ATPase activities, but not for modification. The chain is Putative type I restriction enzyme MpnIIP endonuclease subunit middle part from Mycoplasma pneumoniae (strain ATCC 29342 / M129 / Subtype 1) (Mycoplasmoides pneumoniae).